The following is a 260-amino-acid chain: Dehydrogenase/reductase SDR family member 4 (260 aa).

18–42 (IVTASTDGIGLAIARRLAQDGAHVV) contributes to the NADP(+) binding site. Lys-74 is modified (N6-acetyllysine; alternate). Residue Lys-74 is modified to N6-succinyllysine; alternate. Ser-151 contributes to the substrate binding site. Tyr-164 (proton acceptor) is an active-site residue. Lys-168 lines the NADP(+) pocket. An N6-acetyllysine; alternate modification is found at Lys-198. Lys-198 carries the post-translational modification N6-succinyllysine; alternate. A Phosphoserine modification is found at Ser-202. An N6-succinyllysine modification is found at Lys-209. Positions 258-260 (SRL) match the Peroxisomal targeting signal motif.

Belongs to the short-chain dehydrogenases/reductases (SDR) family. In terms of assembly, homotetramer. As to expression, detected in liver and kidney. Detected at lower levels in heart, lung, spleen, small intestine, testis, brain and stomach.

The protein resides in the peroxisome. The enzyme catalyses a secondary alcohol + NADP(+) = a ketone + NADPH + H(+). It catalyses the reaction 3alpha-hydroxy-5beta-pregnan-20-one + NADP(+) = 5beta-pregnan-3,20-dione + NADPH + H(+). It carries out the reaction 5beta-dihydrotestosterone + NADPH + H(+) = 5beta-androstane-3alpha,17beta-diol + NADP(+). The catalysed reaction is all-trans-retinol + NADP(+) = all-trans-retinal + NADPH + H(+). The enzyme catalyses isatin + NADPH + H(+) = 3-hydroxyindolin-2-one + NADP(+). Inhibited by flavonoids (kaempferol, quercetin, quercitrin, genistein), myristic acid, pyrazole, barbital, phenobarbital and CuSO4. Functionally, NADPH-dependent oxidoreductase which catalyzes the reduction of a variety of compounds bearing carbonyl groups including ketosteroids, alpha-dicarbonyl compounds, aldehydes, aromatic ketones and quinones. Reduces all-trans-retinal and 9-cis retinal. Reduces 3-ketosteroids and benzil into 3alpha-hydroxysteroids and S-benzoin, respectively, in contrast to the stereoselectivity of primates DHRS4s which produce 3beta-hydroxysteroids and R-benzoin. In the reverse reaction, catalyze the NADP-dependent oxidation of 3alpha-hydroxysteroids and alcohol, but with much lower efficiency. Involved in the metabolism of 3alpha-hydroxysteroids, retinoid, isatin and xenobiotic carbonyl compounds. In Oryctolagus cuniculus (Rabbit), this protein is Dehydrogenase/reductase SDR family member 4 (DHRS4).